The sequence spans 641 residues: 1-deoxy-D-xylulose-5-phosphate synthase (641 aa).

Thiamine diphosphate-binding positions include H71 and 112–114 (SHA). Mg(2+) is bound at residue D144. Thiamine diphosphate contacts are provided by residues 145-146 (GA), N173, Y284, and E365. N173 contacts Mg(2+).

This sequence belongs to the transketolase family. DXPS subfamily. As to quaternary structure, homodimer. The cofactor is Mg(2+). It depends on thiamine diphosphate as a cofactor.

It carries out the reaction D-glyceraldehyde 3-phosphate + pyruvate + H(+) = 1-deoxy-D-xylulose 5-phosphate + CO2. The protein operates within metabolic intermediate biosynthesis; 1-deoxy-D-xylulose 5-phosphate biosynthesis; 1-deoxy-D-xylulose 5-phosphate from D-glyceraldehyde 3-phosphate and pyruvate: step 1/1. Catalyzes the acyloin condensation reaction between C atoms 2 and 3 of pyruvate and glyceraldehyde 3-phosphate to yield 1-deoxy-D-xylulose-5-phosphate (DXP). The chain is 1-deoxy-D-xylulose-5-phosphate synthase from Mycolicibacterium paratuberculosis (strain ATCC BAA-968 / K-10) (Mycobacterium paratuberculosis).